Consider the following 178-residue polypeptide: Fatty-acid and retinol-binding protein 1 (178 aa).

Positions 1 to 16 (MYHQLILMALIGVIMA) are cleaved as a signal peptide. 2 N-linked (GlcNAc...) asparagine glycosylation sites follow: Asn44 and Asn75. 2 coiled-coil regions span residues 67–89 (DAAL…ELRN) and 123–154 (KLDM…LKAT). Residue Asn157 is glycosylated (N-linked (GlcNAc...) asparagine).

It belongs to the fatty-acid and retinol-binding protein (FARBP) family. In terms of processing, N-glycosylated.

Its subcellular location is the secreted. In terms of biological role, binds retinol and different fatty acids. The polypeptide is Fatty-acid and retinol-binding protein 1 (Onchocerca gutturosa).